The following is a 353-amino-acid chain: Protein RecA (353 aa).

ATP is bound at residue 65–72; sequence GPESSGKT. Basic and acidic residues predominate over residues 334–345; it reads DAERAGAEREDN. A disordered region spans residues 334 to 353; sequence DAERAGAEREDNAAADDENF.

The protein belongs to the RecA family.

It is found in the cytoplasm. In terms of biological role, can catalyze the hydrolysis of ATP in the presence of single-stranded DNA, the ATP-dependent uptake of single-stranded DNA by duplex DNA, and the ATP-dependent hybridization of homologous single-stranded DNAs. It interacts with LexA causing its activation and leading to its autocatalytic cleavage. The chain is Protein RecA from Edwardsiella ictaluri (strain 93-146).